Here is a 123-residue protein sequence, read N- to C-terminus: Large ribosomal subunit protein uL14 (123 aa).

The protein belongs to the universal ribosomal protein uL14 family. In terms of assembly, part of the 50S ribosomal subunit. Forms a cluster with proteins L3 and L19. In the 70S ribosome, L14 and L19 interact and together make contacts with the 16S rRNA in bridges B5 and B8.

In terms of biological role, binds to 23S rRNA. Forms part of two intersubunit bridges in the 70S ribosome. This is Large ribosomal subunit protein uL14 from Vibrio cholerae serotype O1 (strain ATCC 39541 / Classical Ogawa 395 / O395).